The following is a 143-amino-acid chain: UPF0225 protein Reut_A0143 (143 aa).

Belongs to the UPF0225 family.

This is UPF0225 protein Reut_A0143 from Cupriavidus pinatubonensis (strain JMP 134 / LMG 1197) (Cupriavidus necator (strain JMP 134)).